A 145-amino-acid chain; its full sequence is Small ribosomal subunit protein eS19 (145 aa).

At K23 the chain carries N6-acetyllysine. Residue R67 is modified to Omega-N-methylarginine. 2 positions are modified to N6-acetyllysine: K111 and K115. K143 carries the N6-succinyllysine modification.

It belongs to the eukaryotic ribosomal protein eS19 family. In terms of assembly, component of the small ribosomal subunit. Part of the small subunit (SSU) processome, composed of more than 70 proteins and the RNA chaperone small nucleolar RNA (snoRNA) U3. Interacts with RPS19BP1; the interaction is direct and mediates the integration of RPS19 in state post-A1. Interacts with RPS19BP1.

The protein resides in the cytoplasm. It localises to the nucleus. It is found in the nucleolus. Its function is as follows. Component of the small ribosomal subunit. The ribosome is a large ribonucleoprotein complex responsible for the synthesis of proteins in the cell. Required for pre-rRNA processing and maturation of 40S ribosomal subunits. Part of the small subunit (SSU) processome, first precursor of the small eukaryotic ribosomal subunit. During the assembly of the SSU processome in the nucleolus, many ribosome biogenesis factors, an RNA chaperone and ribosomal proteins associate with the nascent pre-rRNA and work in concert to generate RNA folding, modifications, rearrangements and cleavage as well as targeted degradation of pre-ribosomal RNA by the RNA exosome. The polypeptide is Small ribosomal subunit protein eS19 (RPS19) (Oryctolagus cuniculus (Rabbit)).